We begin with the raw amino-acid sequence, 283 residues long: Protein/nucleic acid deglycase HchA (283 aa).

Residues His-86, Glu-91, and His-123 each contribute to the Zn(2+) site. Residue Cys-185 is the Nucleophile of the active site.

It belongs to the peptidase C56 family. HchA subfamily. Homodimer.

The protein resides in the cytoplasm. It carries out the reaction N(omega)-(1-hydroxy-2-oxopropyl)-L-arginyl-[protein] + H2O = lactate + L-arginyl-[protein] + H(+). The catalysed reaction is N(6)-(1-hydroxy-2-oxopropyl)-L-lysyl-[protein] + H2O = lactate + L-lysyl-[protein] + H(+). The enzyme catalyses S-(1-hydroxy-2-oxopropyl)-L-cysteinyl-[protein] + H2O = lactate + L-cysteinyl-[protein] + H(+). It catalyses the reaction N(omega)-(1-hydroxy-2-oxoethyl)-L-arginyl-[protein] + H2O = L-arginyl-[protein] + glycolate + H(+). It carries out the reaction N(6)-(1-hydroxy-2-oxoethyl)-L-lysyl-[protein] + H2O = glycolate + L-lysyl-[protein] + H(+). The catalysed reaction is S-(1-hydroxy-2-oxoethyl)-L-cysteinyl-[protein] + H2O = glycolate + L-cysteinyl-[protein] + H(+). The enzyme catalyses N(2)-(1-hydroxy-2-oxopropyl)-dGTP + H2O = lactate + dGTP + H(+). It catalyses the reaction N(2)-(1-hydroxy-2-oxopropyl)-GTP + H2O = lactate + GTP + H(+). It carries out the reaction N(2)-(1-hydroxy-2-oxopropyl)-GDP + H2O = lactate + GDP + H(+). The catalysed reaction is N(2)-(1-hydroxy-2-oxopropyl)-GMP + H2O = lactate + GMP + H(+). The enzyme catalyses N(2)-(1-hydroxy-2-oxoethyl)-dGTP + H2O = dGTP + glycolate + H(+). It catalyses the reaction N(2)-(1-hydroxy-2-oxoethyl)-GTP + H2O = glycolate + GTP + H(+). It carries out the reaction N(2)-(1-hydroxy-2-oxoethyl)-GDP + H2O = glycolate + GDP + H(+). The catalysed reaction is N(2)-(1-hydroxy-2-oxoethyl)-GMP + H2O = glycolate + GMP + H(+). The enzyme catalyses an N(2)-(1-hydroxy-2-oxopropyl)-guanosine in RNA + H2O = a guanosine in RNA + lactate + H(+). It catalyses the reaction an N(2)-(1-hydroxy-2-oxopropyl)-2'-deoxyguanosine in DNA + H2O = a 2'-deoxyguanosine in DNA + lactate + H(+). It carries out the reaction an N(2)-(1-hydroxy-2-oxoethyl)-guanosine in RNA + H2O = a guanosine in RNA + glycolate + H(+). The catalysed reaction is an N(2)-(1-hydroxy-2-oxoethyl)-2'-deoxyguanosine in DNA + H2O = a 2'-deoxyguanosine in DNA + glycolate + H(+). Its function is as follows. Protein and nucleotide deglycase that catalyzes the deglycation of the Maillard adducts formed between amino groups of proteins or nucleotides and reactive carbonyl groups of glyoxals. Thus, functions as a protein deglycase that repairs methylglyoxal- and glyoxal-glycated proteins, and releases repaired proteins and lactate or glycolate, respectively. Deglycates cysteine, arginine and lysine residues in proteins, and thus reactivates these proteins by reversing glycation by glyoxals. Acts on early glycation intermediates (hemithioacetals and aminocarbinols), preventing the formation of Schiff bases and advanced glycation endproducts (AGE). Also functions as a nucleotide deglycase able to repair glycated guanine in the free nucleotide pool (GTP, GDP, GMP, dGTP) and in DNA and RNA. Is thus involved in a major nucleotide repair system named guanine glycation repair (GG repair), dedicated to reversing methylglyoxal and glyoxal damage via nucleotide sanitization and direct nucleic acid repair. Plays an important role in protecting cells from carbonyl stress. In Shigella flexneri, this protein is Protein/nucleic acid deglycase HchA.